The chain runs to 364 residues: Mannose-1-phosphate guanyltransferase (364 aa).

Belongs to the transferase hexapeptide repeat family.

It is found in the cytoplasm. The enzyme catalyses alpha-D-mannose 1-phosphate + GTP + H(+) = GDP-alpha-D-mannose + diphosphate. The protein operates within nucleotide-sugar biosynthesis; GDP-alpha-D-mannose biosynthesis; GDP-alpha-D-mannose from alpha-D-mannose 1-phosphate (GTP route): step 1/1. Involved in cell wall synthesis where it is required for glycosylation. Involved in cell cycle progression through cell-size checkpoint. This Cryptococcus neoformans var. neoformans serotype D (strain B-3501A) (Filobasidiella neoformans) protein is Mannose-1-phosphate guanyltransferase (MPG1).